Reading from the N-terminus, the 305-residue chain is MEKKFKVAALYCFADLKHYQKLQKPLLDLCQENGIKGTLLLAKEGINGTVAGSCAAIETLVRFITAEPAFQTPELKYSWASKMPFHRIKVRLKKEIVTMGVEGINPLKAVGTYVAPEDWNALIQDEETLVVDTRNDYEYMLGSFQGAVDPNIKTFREFPQWVANHQDELKKKKRIAMFCTGGIRCEKSTSYMRELGYEEVYHLKGGILQYLETIPKEESLWQGECFVFDERVSVRHGLEESGRELCRACRYPLGAEGKLSSHYEEGVSCDACYDTRSEFDKQRFRERHRQFQLAKARTMNSHQGL.

The Rhodanese domain maps to 124–219 (QDEETLVVDT…YLETIPKEES (96 aa)). Cys-179 functions as the Cysteine persulfide intermediate in the catalytic mechanism.

Belongs to the TrhO family.

The enzyme catalyses uridine(34) in tRNA + AH2 + O2 = 5-hydroxyuridine(34) in tRNA + A + H2O. Its function is as follows. Catalyzes oxygen-dependent 5-hydroxyuridine (ho5U) modification at position 34 in tRNAs. This is tRNA uridine(34) hydroxylase from Bartonella bacilliformis (strain ATCC 35685 / KC583 / Herrer 020/F12,63).